The chain runs to 406 residues: Phosphopentomutase (406 aa).

The Mn(2+) site is built by D10, D305, H310, D346, H347, and H358.

Belongs to the phosphopentomutase family. Mn(2+) serves as cofactor.

It is found in the cytoplasm. The catalysed reaction is 2-deoxy-alpha-D-ribose 1-phosphate = 2-deoxy-D-ribose 5-phosphate. The enzyme catalyses alpha-D-ribose 1-phosphate = D-ribose 5-phosphate. The protein operates within carbohydrate degradation; 2-deoxy-D-ribose 1-phosphate degradation; D-glyceraldehyde 3-phosphate and acetaldehyde from 2-deoxy-alpha-D-ribose 1-phosphate: step 1/2. Its function is as follows. Isomerase that catalyzes the conversion of deoxy-ribose 1-phosphate (dRib-1-P) and ribose 1-phosphate (Rib-1-P) to deoxy-ribose 5-phosphate (dRib-5-P) and ribose 5-phosphate (Rib-5-P), respectively. In Vibrio campbellii (strain ATCC BAA-1116), this protein is Phosphopentomutase.